Reading from the N-terminus, the 353-residue chain is Ferrochelatase (353 aa).

Residues 1 to 13 (MTLERTGRDEEKA) are compositionally biased toward basic and acidic residues. The disordered stretch occupies residues 1–23 (MTLERTGRDEEKALTQPPSGHSS). Residues His-223 and Glu-304 each contribute to the Fe cation site.

The protein belongs to the ferrochelatase family.

The protein localises to the cytoplasm. The enzyme catalyses heme b + 2 H(+) = protoporphyrin IX + Fe(2+). It participates in porphyrin-containing compound metabolism; protoheme biosynthesis; protoheme from protoporphyrin-IX: step 1/1. Catalyzes the ferrous insertion into protoporphyrin IX. The chain is Ferrochelatase from Chelativorans sp. (strain BNC1).